The following is a 682-amino-acid chain: DNA-directed RNA polymerase subunit beta' (682 aa).

C69, C71, C87, and C90 together coordinate Zn(2+). D489, D491, and D493 together coordinate Mg(2+).

Belongs to the RNA polymerase beta' chain family. RpoC1 subfamily. As to quaternary structure, in plastids the minimal PEP RNA polymerase catalytic core is composed of four subunits: alpha, beta, beta', and beta''. When a (nuclear-encoded) sigma factor is associated with the core the holoenzyme is formed, which can initiate transcription. Requires Mg(2+) as cofactor. It depends on Zn(2+) as a cofactor.

It localises to the plastid. The protein resides in the chloroplast. It catalyses the reaction RNA(n) + a ribonucleoside 5'-triphosphate = RNA(n+1) + diphosphate. DNA-dependent RNA polymerase catalyzes the transcription of DNA into RNA using the four ribonucleoside triphosphates as substrates. The protein is DNA-directed RNA polymerase subunit beta' of Acorus gramineus (Dwarf sweet flag).